Here is a 165-residue protein sequence, read N- to C-terminus: Growth arrest and DNA damage-inducible protein GADD45 alpha (165 aa).

Phosphothreonine is present on Thr2.

This sequence belongs to the GADD45 family. As to quaternary structure, interacts with AURKA, PCNA, GADD45GIP1 and MAPK14.

The protein resides in the nucleus. Its function is as follows. Might affect PCNA interaction with some CDK (cell division protein kinase) complexes; stimulates DNA excision repair in vitro and inhibits entry of cells into S phase. In T-cells, functions as a regulator of p38 MAPKs by inhibiting p88 phosphorylation and activity. This is Growth arrest and DNA damage-inducible protein GADD45 alpha (GADD45A) from Cricetulus griseus (Chinese hamster).